A 609-amino-acid chain; its full sequence is Rhotekin-2 (609 aa).

The REM-1 domain maps to 5-81 (SLRGPALRLA…LQKLEEQIAN (77 aa)). Residues 56–91 (KNLMVCNARLMAYTSELQKLEEQIANQTGRCDVKFE) are a coiled coil. Residues 286 to 393 (EDAFAGFLNQ…WMEAFWQHFF (108 aa)) form the PH domain. Disordered regions lie at residues 495–520 (HDEKGKKRQAPLPPSDKLPFSLKSQS) and 554–609 (KPMA…QAQV). Positions 569-582 (RLSDGEHTDTKTNF) are enriched in basic and acidic residues.

In terms of tissue distribution, expressed in lymphocytes, CD4 positive T-cells and bone marrow-derived cells. Also expressed in lung, colon, thymus and brain.

May play an important role in lymphopoiesis. The sequence is that of Rhotekin-2 (RTKN2) from Homo sapiens (Human).